A 213-amino-acid polypeptide reads, in one-letter code: Large ribosomal subunit protein uL3 (213 aa).

The disordered stretch occupies residues 130–161 (KRGNMTHGSKNHRLPGSTGAGTTPGRVYPGKR).

It belongs to the universal ribosomal protein uL3 family. In terms of assembly, part of the 50S ribosomal subunit. Forms a cluster with proteins L14 and L19.

One of the primary rRNA binding proteins, it binds directly near the 3'-end of the 23S rRNA, where it nucleates assembly of the 50S subunit. The sequence is that of Large ribosomal subunit protein uL3 from Picosynechococcus sp. (strain ATCC 27264 / PCC 7002 / PR-6) (Agmenellum quadruplicatum).